We begin with the raw amino-acid sequence, 256 residues long: uncharacterized protein (256 aa).

The signal sequence occupies residues 1-22; the sequence is MGYLKRFALYISVMILIFAIAG. The N-palmitoyl cysteine moiety is linked to residue C23. Residue C23 is the site of S-diacylglycerol cysteine attachment.

This sequence belongs to the staphylococcal tandem lipoprotein family.

It localises to the cell membrane. This is an uncharacterized protein from Staphylococcus aureus (strain COL).